A 280-amino-acid chain; its full sequence is RNA polymerase II holoenzyme cyclin-like subunit (280 aa).

Residues glutamate 23–valine 150 enclose the Cyclin N-terminal domain.

This sequence belongs to the cyclin family. Cyclin C subfamily. Component of the SRB8-11 complex, a regulatory module of the Mediator complex.

It is found in the nucleus. Functionally, component of the SRB8-11 complex. The SRB8-11 complex is a regulatory module of the Mediator complex which is itself involved in regulation of basal and activated RNA polymerase II-dependent transcription. The SRB8-11 complex may be involved in the transcriptional repression of a subset of genes regulated by Mediator. It may inhibit the association of the Mediator complex with RNA polymerase II to form the holoenzyme complex. The SRB8-11 complex phosphorylates the C-terminal domain (CTD) of the largest subunit of RNA polymerase II. The polypeptide is RNA polymerase II holoenzyme cyclin-like subunit (SSN8) (Yarrowia lipolytica (strain CLIB 122 / E 150) (Yeast)).